We begin with the raw amino-acid sequence, 283 residues long: Digeranylgeranylglyceryl phosphate synthase (283 aa).

8 helical membrane passes run Val5–Ala27, Ala37–Tyr57, Leu85–Ile105, Pro128–Tyr148, Glu152–Ala172, Ala203–Tyr223, Ile228–Leu248, and Leu263–Phe283.

Belongs to the UbiA prenyltransferase family. DGGGP synthase subfamily. Mg(2+) is required as a cofactor.

The protein localises to the cell membrane. It carries out the reaction sn-3-O-(geranylgeranyl)glycerol 1-phosphate + (2E,6E,10E)-geranylgeranyl diphosphate = 2,3-bis-O-(geranylgeranyl)-sn-glycerol 1-phosphate + diphosphate. It functions in the pathway membrane lipid metabolism; glycerophospholipid metabolism. In terms of biological role, prenyltransferase that catalyzes the transfer of the geranylgeranyl moiety of geranylgeranyl diphosphate (GGPP) to the C2 hydroxyl of (S)-3-O-geranylgeranylglyceryl phosphate (GGGP). This reaction is the second ether-bond-formation step in the biosynthesis of archaeal membrane lipids. The chain is Digeranylgeranylglyceryl phosphate synthase from Methanobrevibacter smithii (strain ATCC 35061 / DSM 861 / OCM 144 / PS).